Consider the following 249-residue polypeptide: Adenylate kinase (249 aa).

An ATP-binding site is contributed by 43–48; it reads GAGKGT. An NMP region spans residues 63 to 92; sequence ATGDMLRAQVAAKSALGVEAKKIMDQGGLV. Residues threonine 64, arginine 69, 90–92, 119–122, and glutamine 126 each bind AMP; these read GLV and GFPR. The interval 160–197 is LID; sequence GRLVHPASGRSYHKLFNPPKKDMIDDVSGDALVQRSDD. ATP contacts are provided by residues arginine 161 and 170–171; that span reads SY. AMP is bound by residues arginine 194 and arginine 205. Glutamine 233 serves as a coordination point for ATP.

The protein belongs to the adenylate kinase family. AK2 subfamily. Monomer.

It is found in the cytoplasm. The protein resides in the cytosol. It localises to the mitochondrion intermembrane space. It carries out the reaction AMP + ATP = 2 ADP. Functionally, catalyzes the reversible transfer of the terminal phosphate group between ATP and AMP. Plays an important role in cellular energy homeostasis and in adenine nucleotide metabolism. Adenylate kinase activity is critical for regulation of the phosphate utilization and the AMP de novo biosynthesis pathways. The protein is Adenylate kinase of Debaryomyces hansenii (strain ATCC 36239 / CBS 767 / BCRC 21394 / JCM 1990 / NBRC 0083 / IGC 2968) (Yeast).